Consider the following 531-residue polypeptide: MVGCDLLWLAAASCVLTLVSPSTIHQGYGRPRNSSNLDLDCGSPDSPSSGICFDPCQNHTVLNDPTRSTENNDSSVAWCDDNLHGWYRFVGDGGVKMPETCVSVFRCHTSAPMWLSGSHPILGDGIVSHTACANWNENCCFWRSEVQVKACSEELGEYHVYKLQGTPECSLRYCTDPSTAPKNCEITCRPEEECVFQNNNWSCVCRQDLHVSDSQSLQPLLDCGDNEIKVKLDKCLLGGMGFKEEIIAYLNDRNCNGTMQDEPNNWVSMTSPVVANYCGNILEKNGTHAIYRNTLSLATDFIIRDFRVNVNFQCAYPLDMSVSLETALQPIVSSLTVDVDGAGEFNVKMALFQDQSYTNPYEGAEVLLPVESILYVGVLLNRGDTSRFKLLLTNCYATPSEDRHDPVKYFIIKNRCPNQRDSTINVRENGVSSESRFSVQMFMFAGNYDLVFLHCEVYLCDSTTEQCQPSCSTNRLRSSRPAIDYNRVLDLGPITKRSAQSSATSKGTPHTTGFLLAWPMFFLPVFLALLF.

A signal peptide spans 1-21 (MVGCDLLWLAAASCVLTLVSP). A glycan (N-linked (GlcNAc...) asparagine) is linked at Asn-33. Positions 34–53 (SSNLDLDCGSPDSPSSGICF) are beta hairpin. Cystine bridges form between Cys-41–Cys-52, Cys-56–Cys-151, Cys-79–Cys-169, Cys-101–Cys-139, Cys-107–Cys-174, Cys-132–Cys-140, Cys-184–Cys-194, Cys-188–Cys-203, Cys-205–Cys-235, Cys-223–Cys-314, and Cys-255–Cys-278. The D10C stretch occupies residues 54-74 (DPCQNHTVLNDPTRSTENNDS). N-linked (GlcNAc...) asparagine glycans are attached at residues Asn-58 and Asn-72. Residues 180 to 224 (APKNCEITCRPEEECVFQNNNWSCVCRQDLHVSDSQSLQPLLDCG) form the EGF-like domain. Asn-200 carries N-linked (GlcNAc...) asparagine glycosylation. A ZP-N region spans residues 222 to 315 (DCGDNEIKVK…FRVNVNFQCA (94 aa)). One can recognise a ZP domain in the interval 222–478 (DCGDNEIKVK…PSCSTNRLRS (257 aa)). N-linked (GlcNAc...) asparagine glycosylation is found at Asn-256 and Asn-285. The flexible ZP-N/ZP-C linker stretch occupies residues 316-339 (YPLDMSVSLETALQPIVSSLTVDV). The tract at residues 340–351 (DGAGEFNVKMAL) is internal hydrophobic patch (IHP). The interval 340–478 (DGAGEFNVKM…PSCSTNRLRS (139 aa)) is ZP-C. Intrachain disulfides connect Cys-395–Cys-455, Cys-416–Cys-471, and Cys-460–Cys-467. Residues 485–493 (YNRVLDLGP) are external hydrophobic patch (EHP).

As to quaternary structure, interacts with SYCN. Interacts with bacterial adhesin fimH. N-glycosylated. As to expression, specifically expressed by M (microfold) cells which are atypical epithelial cells of the intestine.

Its subcellular location is the zymogen granule membrane. The protein localises to the secreted. It is found in the cell membrane. The protein resides in the apical cell membrane. It localises to the membrane raft. Its subcellular location is the endosome. Functions as an intestinal M-cell transcytotic receptor specific of type-I-piliated bacteria that participates in the mucosal immune response toward these bacteria. At the apical membrane of M-cells it binds fimH, a protein of the bacteria type I pilus tip. Internalizes bound bacteria, like E.coli and S.typhimurium, from the lumen of the intestine and delivers them, through M-cells, to the underlying organized lymphoid follicles where they are captured by antigen-presenting dendritic cells to elicit a mucosal immune response. The sequence is that of Pancreatic secretory granule membrane major glycoprotein GP2 from Mus musculus (Mouse).